Here is a 122-residue protein sequence, read N- to C-terminus: MKSVLYSYILFLSCIIINGRDIAPHAPSDGKCKDNEYKRHNLCPGTYASRLCDSKTNTQCTPCGSGTFTSRNNHLPACLSCNGRRDRVTRLTIESVNALPDIIVFSKDHPDARHVFPKQNVE.

Its function is as follows. The protein is truncated in this strain and presumably inactive. It has similarities with variola virus CrmB, but the product is inactivated due to several premature stop codons. The polypeptide is Truncated CrmB protein (OPG002) (Bos taurus (Bovine)).